The sequence spans 103 residues: Large ribosomal subunit protein bL21 (103 aa).

It belongs to the bacterial ribosomal protein bL21 family. In terms of assembly, part of the 50S ribosomal subunit. Contacts protein L20.

Its function is as follows. This protein binds to 23S rRNA in the presence of protein L20. This Alkaliphilus oremlandii (strain OhILAs) (Clostridium oremlandii (strain OhILAs)) protein is Large ribosomal subunit protein bL21.